A 290-amino-acid polypeptide reads, in one-letter code: MMTSNSYWQRLKVAFQYVMPQIYLTQIAGWFAKQKWGKITHFVIKAFAKKYNIDMSIAQKEQFSDYASFNEFFIRPLKENARPINQNPTALCLPADGRISECGHIDDNLLLQAKGHFFSLEDLLAEDKELVETFKNGEFVTTYLSPRDYHRVHMPCDATLRKMIYVPGDLFSVNPFLAQHVPNLFARNERVICVFDTEFGTMVQILVGATITASIGTTWAGVINPPRHNEVKTWTYEGESAVKLLKGQEMGWFQLGSTVINLFQANQVRLADHLSVNEPVRMGEILAYKK.

Residues Asp-96, His-153, and Ser-257 each act as charge relay system; for autoendoproteolytic cleavage activity in the active site. Ser-257 serves as the catalytic Schiff-base intermediate with substrate; via pyruvic acid; for decarboxylase activity. The residue at position 257 (Ser-257) is a Pyruvic acid (Ser); by autocatalysis.

The protein belongs to the phosphatidylserine decarboxylase family. PSD-B subfamily. Prokaryotic type I sub-subfamily. As to quaternary structure, heterodimer of a large membrane-associated beta subunit and a small pyruvoyl-containing alpha subunit. The cofactor is pyruvate. Post-translationally, is synthesized initially as an inactive proenzyme. Formation of the active enzyme involves a self-maturation process in which the active site pyruvoyl group is generated from an internal serine residue via an autocatalytic post-translational modification. Two non-identical subunits are generated from the proenzyme in this reaction, and the pyruvate is formed at the N-terminus of the alpha chain, which is derived from the carboxyl end of the proenzyme. The autoendoproteolytic cleavage occurs by a canonical serine protease mechanism, in which the side chain hydroxyl group of the serine supplies its oxygen atom to form the C-terminus of the beta chain, while the remainder of the serine residue undergoes an oxidative deamination to produce ammonia and the pyruvoyl prosthetic group on the alpha chain. During this reaction, the Ser that is part of the protease active site of the proenzyme becomes the pyruvoyl prosthetic group, which constitutes an essential element of the active site of the mature decarboxylase.

It is found in the cell membrane. The enzyme catalyses a 1,2-diacyl-sn-glycero-3-phospho-L-serine + H(+) = a 1,2-diacyl-sn-glycero-3-phosphoethanolamine + CO2. It participates in phospholipid metabolism; phosphatidylethanolamine biosynthesis; phosphatidylethanolamine from CDP-diacylglycerol: step 2/2. Catalyzes the formation of phosphatidylethanolamine (PtdEtn) from phosphatidylserine (PtdSer). The sequence is that of Phosphatidylserine decarboxylase proenzyme from Haemophilus influenzae (strain ATCC 51907 / DSM 11121 / KW20 / Rd).